The chain runs to 367 residues: Cell division protein FtsZ (367 aa).

GTP is bound by residues 17–21, 104–106, Glu-135, Lys-139, and Asp-183; these read GGGSN and GTG.

This sequence belongs to the FtsZ family. In terms of assembly, homodimer. Polymerizes to form a dynamic ring structure in a strictly GTP-dependent manner. Interacts directly with several other division proteins.

The protein resides in the cytoplasm. Functionally, essential cell division protein that forms a contractile ring structure (Z ring) at the future cell division site. The regulation of the ring assembly controls the timing and the location of cell division. One of the functions of the FtsZ ring is to recruit other cell division proteins to the septum to produce a new cell wall between the dividing cells. Binds GTP and shows GTPase activity. This chain is Cell division protein FtsZ, found in Aquifex aeolicus (strain VF5).